A 481-amino-acid chain; its full sequence is CUGBP Elav-like family member 6 (481 aa).

Over residues 1-12 (MAAAPGGSAQPA) the composition is skewed to low complexity. Residues 1–34 (MAAAPGGSAQPAGPGPRLGFSTADSGVGMSGLNP) form a disordered region. RRM domains are found at residues 46 to 127 (IKLF…PAAS), 134 to 214 (RKLF…LADT), and 396 to 474 (CNLF…LKRP).

This sequence belongs to the CELF/BRUNOL family. Expressed mainly in kidney, brain and testis and present in other tissues albeit at lower levels. Also expressed in fetal kidney.

The protein resides in the nucleus. The protein localises to the cytoplasm. Functionally, RNA-binding protein implicated in the regulation of pre-mRNA alternative splicing. Mediates exon inclusion and/or exclusion in pre-mRNA that are subject to tissue-specific and developmentally regulated alternative splicing. Specifically activates exon 5 inclusion of TNNT2 in a muscle-specific splicing enhancer (MSE)-dependent manner. Promotes also exon exclusion of INSR pre-mRNA. In Homo sapiens (Human), this protein is CUGBP Elav-like family member 6 (CELF6).